We begin with the raw amino-acid sequence, 189 residues long: Cancer/testis antigen family 45 member A2 (189 aa).

The protein belongs to the CT45 family. In terms of tissue distribution, testis specific. Expressed in cancer cell lines.

The sequence is that of Cancer/testis antigen family 45 member A2 from Homo sapiens (Human).